Here is a 464-residue protein sequence, read N- to C-terminus: E3 ubiquitin-protein ligase MYLIP-B (464 aa).

One can recognise an FERM domain in the interval 1–279 (MLCHITRPDS…EIHAFYRCDT (279 aa)). Residues 381–416 (CALCCEQEISAAFCPCGHMFCCYNCASQLQCCPVCR) form an RING-type zinc finger.

As to quaternary structure, interacts with anxa5.

It is found in the cytoplasm. It localises to the cytosol. It catalyses the reaction S-ubiquitinyl-[E2 ubiquitin-conjugating enzyme]-L-cysteine + [acceptor protein]-L-lysine = [E2 ubiquitin-conjugating enzyme]-L-cysteine + N(6)-ubiquitinyl-[acceptor protein]-L-lysine.. Its pathway is protein modification; protein ubiquitination. Its function is as follows. E3 ubiquitin-protein ligase that mediates ubiquitination and subsequent proteasomal degradation of myosin regulatory light chain (MRLC). Regulates cell movements during gastrulation by acting downstream of fz7 to antagonize the frizzled-signaling pathway. The protein is E3 ubiquitin-protein ligase MYLIP-B of Danio rerio (Zebrafish).